Reading from the N-terminus, the 369-residue chain is 3-dehydroquinate synthase (369 aa).

NAD(+)-binding positions include Asp70–Lys75, Gly104–Asp108, Thr128–Thr129, Lys141, Lys150, and Thr168–Thr171. Residues Glu183, His246, and His262 each contribute to the Zn(2+) site.

Belongs to the sugar phosphate cyclases superfamily. Dehydroquinate synthase family. Co(2+) serves as cofactor. Zn(2+) is required as a cofactor. Requires NAD(+) as cofactor.

The protein localises to the cytoplasm. The enzyme catalyses 7-phospho-2-dehydro-3-deoxy-D-arabino-heptonate = 3-dehydroquinate + phosphate. The protein operates within metabolic intermediate biosynthesis; chorismate biosynthesis; chorismate from D-erythrose 4-phosphate and phosphoenolpyruvate: step 2/7. Functionally, catalyzes the conversion of 3-deoxy-D-arabino-heptulosonate 7-phosphate (DAHP) to dehydroquinate (DHQ). The sequence is that of 3-dehydroquinate synthase from Rhodococcus erythropolis (strain PR4 / NBRC 100887).